Reading from the N-terminus, the 269-residue chain is Senescence-associated protein 13 (269 aa).

An NADP(+)-binding site is contributed by 21-45 (LVTGGSKGIGEAVVEELAMLGAKVH). Residue Ser-154 participates in substrate binding. Catalysis depends on Tyr-167, which acts as the Proton acceptor.

The protein belongs to the short-chain dehydrogenases/reductases (SDR) family. SDR65C subfamily.

Unspecific reductase providing both diastereomeric alcohols from the prochiral ketones. Active on cyclic monoterpenes and small flexible lipophilic carbonyls. No activity with tropinone, nitrogen-containing tropinone analogs, tropine or pseudotropine as substrate. This chain is Senescence-associated protein 13, found in Arabidopsis thaliana (Mouse-ear cress).